Reading from the N-terminus, the 271-residue chain is Probable L,D-transpeptidase 3 (271 aa).

One can recognise a L,D-TPase catalytic domain in the interval 127–270; it reads VVGVASISQH…VDIGDPVIVQ (144 aa). The active-site Proton donor/acceptor is the His-228. Residue Cys-246 is the Nucleophile of the active site.

It participates in cell wall biogenesis; peptidoglycan biosynthesis. Is irreversibly inactivated by the beta-lactam carbapenems via the formation of a covalent adduct resulting from acylation of the catalytic Cys. Imipenem is the most efficient drug for in vitro LdtMt3/Rv1433 inactivation. Functionally, probable L,D-transpeptidase that may perform as-yet-unknown cross-linking reactions in M.tuberculosis. Is not able to generate 3-&gt;3 cross-links in peptidoglycan, using tetrapeptide stems as acyl donor substrates. May function in the anchoring of proteins to peptidoglycan. This is Probable L,D-transpeptidase 3 from Mycobacterium tuberculosis (strain ATCC 25618 / H37Rv).